Reading from the N-terminus, the 210-residue chain is S-norcoclaurine synthase (210 aa).

Positions 1 to 19 (MMKMEVVFVFLMLLGTINC) are cleaved as a signal peptide. 108–110 (YKE) contributes to the dopamine binding site. Lys122 (proton donor) is an active-site residue. Asp141 is a binding site for (4-hydroxyphenyl)acetaldehyde.

The protein belongs to the BetVI family. Concentration-dependent dimerization, but mainly monomeric at concentrations around 10 uM. Expressed most abundantly in the rhizomes and to a lesser extent in petioles, roots, leaves and flower buds.

It carries out the reaction (4-hydroxyphenyl)acetaldehyde + dopamine = (S)-norcoclaurine + H2O. In terms of biological role, involved in the biosynthesis of the common precursor of all benzylisoquinoline alkaloids such as morphine, sanguinarine, codeine or berberine. Condenses dopamine and 4-hydroxyphenylacetaldehyde. This chain is S-norcoclaurine synthase, found in Thalictrum flavum subsp. glaucum (Yellow meadow rue).